The sequence spans 158 residues: Pyruvoyl-dependent arginine decarboxylase (158 aa).

Pyruvic acid (Ser) is present on Ser-44.

The protein belongs to the PdaD family. It depends on pyruvate as a cofactor.

It catalyses the reaction L-arginine + H(+) = agmatine + CO2. This chain is Pyruvoyl-dependent arginine decarboxylase, found in Pyrococcus horikoshii (strain ATCC 700860 / DSM 12428 / JCM 9974 / NBRC 100139 / OT-3).